Consider the following 451-residue polypeptide: D-inositol 3-phosphate glycosyltransferase (451 aa).

Residue His21 participates in 1D-myo-inositol 3-phosphate binding. UDP-N-acetyl-alpha-D-glucosamine contacts are provided by residues 27 to 28 (QP) and Gly35. Residues 32–37 (DAGGMN), Lys90, Tyr123, Thr147, and Arg167 contribute to the 1D-myo-inositol 3-phosphate site. The UDP-N-acetyl-alpha-D-glucosamine site is built by Arg241, Lys246, and Gln305. Tyr314, Arg315, and Ala317 together coordinate Mg(2+). Residues Glu327 and Glu335 each contribute to the UDP-N-acetyl-alpha-D-glucosamine site. Thr341 is a Mg(2+) binding site.

The protein belongs to the glycosyltransferase group 1 family. MshA subfamily. In terms of assembly, homodimer.

It carries out the reaction 1D-myo-inositol 3-phosphate + UDP-N-acetyl-alpha-D-glucosamine = 1D-myo-inositol 2-acetamido-2-deoxy-alpha-D-glucopyranoside 3-phosphate + UDP + H(+). Catalyzes the transfer of a N-acetyl-glucosamine moiety to 1D-myo-inositol 3-phosphate to produce 1D-myo-inositol 2-acetamido-2-deoxy-glucopyranoside 3-phosphate in the mycothiol biosynthesis pathway. This is D-inositol 3-phosphate glycosyltransferase from Nocardia farcinica (strain IFM 10152).